Here is a 520-residue protein sequence, read N- to C-terminus: Glucose-6-phosphate isomerase (520 aa).

The active-site Proton donor is Glu327. Catalysis depends on residues His358 and Lys486.

The protein belongs to the GPI family.

The protein resides in the cytoplasm. The enzyme catalyses alpha-D-glucose 6-phosphate = beta-D-fructose 6-phosphate. It functions in the pathway carbohydrate biosynthesis; gluconeogenesis. It participates in carbohydrate degradation; glycolysis; D-glyceraldehyde 3-phosphate and glycerone phosphate from D-glucose: step 2/4. Functionally, catalyzes the reversible isomerization of glucose-6-phosphate to fructose-6-phosphate. This Bordetella avium (strain 197N) protein is Glucose-6-phosphate isomerase.